The sequence spans 1711 residues: Nuclear pore complex protein Nup214 (1711 aa).

8 tandem repeats follow at residues 472 to 473 (FG), 486 to 487 (FG), 497 to 498 (FG), 511 to 512 (FG), 514 to 515 (FG), 535 to 536 (FG), 588 to 589 (TS), and 598 to 599 (SL). The 45 X 2 AA repeats of F-G stretch occupies residues 472 to 1703 (FGAAAAKAPA…NSNAQKPAFG (1232 aa)). Leucine-zipper stretches follow at residues 650 to 672 (LDDL…VQGL) and 767 to 788 (LTRL…KSKL). The tract at residues 886-905 (KPATANKYTQAAVAPPSPPD) is disordered. Residues 1009–1010 (FG) form repeat 9. The segment at 1012 to 1081 (GSPAVAAPTP…NKSFGFGGFT (70 aa)) is disordered. Basic and acidic residues-rich tracts occupy residues 1037–1051 (TKPK…KEFK) and 1058–1072 (EESK…ETEN). The interaction with emb stretch occupies residues 1044–1711 (AAESKEFKAV…FGGSSFMNYR (668 aa)). 8 repeat units span residues 1075–1076 (FG), 1077–1078 (FG), 1097–1098 (FG), 1106–1107 (FG), 1135–1136 (FG), 1218–1219 (FG), 1229–1230 (FG), and 1240–1241 (FG). The segment covering 1251-1261 (TSVTEANNKTD) has biased composition (polar residues). Residues 1251–1270 (TSVTEANNKTDPISTTPSAI) are disordered. 27 tandem repeats follow at residues 1356–1357 (FG), 1388–1389 (FG), 1399–1400 (FG), 1434–1435 (FG), 1449–1450 (FG), 1458–1459 (FG), 1472–1473 (FG), 1481–1482 (FG), 1487–1488 (FG), 1507–1508 (FG), 1512–1513 (FG), 1539–1540 (FG), 1547–1548 (FG), 1562–1563 (FG), 1571–1572 (FG), 1584–1585 (FG), 1588–1589 (FG), 1601–1602 (FG), 1617–1618 (FG), 1623–1624 (FG), 1629–1630 (FG), 1635–1636 (FG), 1641–1642 (FG), 1647–1648 (FG), 1650–1651 (FG), 1662–1663 (FG), and 1686–1687 (FG). 2 disordered regions span residues 1533 to 1552 (SPQA…SPAT) and 1557 to 1614 (SGGS…TTTP). Composition is skewed to gly residues over residues 1560-1572 (SIFG…GGFG) and 1582-1595 (GGFG…GGGS). Residues 1596-1614 (VAQTGFGSPQAPQQQTTTP) are compositionally biased toward low complexity. Positions 1688 to 1698 (NLAQTGNSNAQ) are enriched in polar residues. Positions 1688-1711 (NLAQTGNSNAQKPAFGGSSFMNYR) are disordered. Residues 1702 to 1703 (FG) form repeat 45.

As to quaternary structure, component of the nuclear pore complex. Interacts with mbo/Nup88 and (via C-terminus) with emb to attenuate emb-mediated protein export.

It localises to the nucleus. The protein resides in the nuclear pore complex. It is found in the nucleus membrane. Part of the nuclear pore complex. Serves as a docking site in the receptor-mediated import of substrates across the nuclear pore complex including emb, RanGAP and phosphorylated Mad. Protects mbo/Nup88 from proteasomal degradation at the nuclear pore. Together with mbo/Nup88, sequesters emb in the cytoplasm and thereby attenuates nuclear export signal (NES)-mediated nuclear export. Together with mbo/Nup88, required for the nuclear import of the Rel family transcription factors dorsal (dl) and Dorsal-related immunity factor (Dif) and the activation of an immune response. This is Nuclear pore complex protein Nup214 from Drosophila melanogaster (Fruit fly).